The primary structure comprises 94 residues: Co-chaperonin GroES (94 aa).

This sequence belongs to the GroES chaperonin family. As to quaternary structure, heptamer of 7 subunits arranged in a ring. Interacts with the chaperonin GroEL.

It localises to the cytoplasm. Together with the chaperonin GroEL, plays an essential role in assisting protein folding. The GroEL-GroES system forms a nano-cage that allows encapsulation of the non-native substrate proteins and provides a physical environment optimized to promote and accelerate protein folding. GroES binds to the apical surface of the GroEL ring, thereby capping the opening of the GroEL channel. The protein is Co-chaperonin GroES of Bacillus licheniformis (strain ATCC 14580 / DSM 13 / JCM 2505 / CCUG 7422 / NBRC 12200 / NCIMB 9375 / NCTC 10341 / NRRL NRS-1264 / Gibson 46).